The primary structure comprises 310 residues: Transcription initiation factor IIA subunit 1 (310 aa).

Disordered regions lie at residues 52–78 (AISN…LSTV), 91–197 (IQLN…NNKD), and 218–261 (VIPQ…DDPD). Low complexity-rich tracts occupy residues 62–77 (TTAT…TLST) and 122–160 (SNGT…PSSL). Acidic residues-rich tracts occupy residues 173 to 183 (TLDESDNDDDN), 225 to 236 (LNDDDDLDDEEI), and 246 to 261 (DSLG…DDPD).

Belongs to the TFIIA subunit 1 family. In terms of assembly, TFIIA is a heterodimer of the large subunit 1 and a small subunit gamma.

The protein resides in the nucleus. TFIIA is a component of the transcription machinery of RNA polymerase II and plays an important role in transcriptional activation. TFIIA in a complex with tbp mediates transcriptional activity. The polypeptide is Transcription initiation factor IIA subunit 1 (gtf2a1) (Dictyostelium discoideum (Social amoeba)).